A 512-amino-acid chain; its full sequence is ATP synthase subunit alpha (512 aa).

An ATP-binding site is contributed by 170–177 (GDRQTGKT).

It belongs to the ATPase alpha/beta chains family. As to quaternary structure, F-type ATPases have 2 components, CF(1) - the catalytic core - and CF(0) - the membrane proton channel. CF(1) has five subunits: alpha(3), beta(3), gamma(1), delta(1), epsilon(1). CF(0) has three main subunits: a(1), b(2) and c(9-12). The alpha and beta chains form an alternating ring which encloses part of the gamma chain. CF(1) is attached to CF(0) by a central stalk formed by the gamma and epsilon chains, while a peripheral stalk is formed by the delta and b chains.

It is found in the cell inner membrane. It carries out the reaction ATP + H2O + 4 H(+)(in) = ADP + phosphate + 5 H(+)(out). Its function is as follows. Produces ATP from ADP in the presence of a proton gradient across the membrane. The alpha chain is a regulatory subunit. The sequence is that of ATP synthase subunit alpha from Solibacter usitatus (strain Ellin6076).